Reading from the N-terminus, the 485-residue chain is Glutamate--tRNA ligase (485 aa).

The short motif at 12–22 (PSPTGEPHVGT) is the 'HIGH' region element. The Zn(2+) site is built by C109, C111, C136, and H138. The 'KMSKS' region motif lies at 253–257 (KLSKR). K256 serves as a coordination point for ATP.

It belongs to the class-I aminoacyl-tRNA synthetase family. Glutamate--tRNA ligase type 1 subfamily. Monomer. Zn(2+) serves as cofactor.

The protein localises to the cytoplasm. It catalyses the reaction tRNA(Glu) + L-glutamate + ATP = L-glutamyl-tRNA(Glu) + AMP + diphosphate. Its function is as follows. Catalyzes the attachment of glutamate to tRNA(Glu) in a two-step reaction: glutamate is first activated by ATP to form Glu-AMP and then transferred to the acceptor end of tRNA(Glu). This chain is Glutamate--tRNA ligase, found in Agrobacterium fabrum (strain C58 / ATCC 33970) (Agrobacterium tumefaciens (strain C58)).